A 328-amino-acid chain; its full sequence is tRNA dimethylallyltransferase (328 aa).

10–17 (GPTASGKT) is a binding site for ATP. Residue 12–17 (TASGKT) coordinates substrate.

The protein belongs to the IPP transferase family. Monomer. Mg(2+) is required as a cofactor.

It carries out the reaction adenosine(37) in tRNA + dimethylallyl diphosphate = N(6)-dimethylallyladenosine(37) in tRNA + diphosphate. Catalyzes the transfer of a dimethylallyl group onto the adenine at position 37 in tRNAs that read codons beginning with uridine, leading to the formation of N6-(dimethylallyl)adenosine (i(6)A). The sequence is that of tRNA dimethylallyltransferase from Bifidobacterium longum (strain NCC 2705).